The primary structure comprises 530 residues: Membrane-associated transporter protein (530 aa).

Residues 1–45 (MSGSNGPTDTHTYQSLAEDCPFGSVEQPKRSTGRLVMHSMAMFGR) lie on the Cytoplasmic side of the membrane. The helical transmembrane segment at 46 to 66 (EFCYAVEAAYVTPVLLSVGLP) threads the bilayer. Residues 67 to 68 (KS) are Extracellular-facing. The helical transmembrane segment at 69 to 89 (LYSMVWLLSPILGFLLQPVVG) threads the bilayer. Topologically, residues 90-105 (SASDHCRARWGRRRPY) are cytoplasmic. A helical membrane pass occupies residues 106 to 126 (ILTLAIMMLLGMALYLNGDAV). Residues 127-138 (VSALVANPRQKL) are Extracellular-facing. Residues 139–159 (IWAISITMVGVVLFDFSADFI) traverse the membrane as a helical segment. The Cytoplasmic segment spans residues 160-184 (DGPIKAYLFDVCSHQDKEKGLHYHA). Residues 185–205 (LFTGFGGALGYILGAIDWVHL) form a helical membrane-spanning segment. Topologically, residues 206-216 (DLGRLLGTEFQ) are extracellular. A helical membrane pass occupies residues 217-237 (VMFFFSALVLILCFITHLCSI). The Cytoplasmic portion of the chain corresponds to 238–318 (PEAPLRDAAT…ALVNMPSHYR (81 aa)). Residues 275-299 (KNGGADTEQPVQEWKNKKPSGQSQR) are disordered. Residues 319–339 (CLCVSHLIGWTAFLSNMLFFT) form a helical membrane-spanning segment. Residues 340–366 (DFMGQIVYHGDPYGAHNSTEFLIYERG) lie on the Extracellular side of the membrane. N-linked (GlcNAc...) asparagine glycosylation is present at Asn356. Residues 367 to 387 (VEVGCWGLCINSVFSSVYSYF) traverse the membrane as a helical segment. Residues 388 to 398 (QKAMVSYIGLK) are Cytoplasmic-facing. A helical transmembrane segment spans residues 399–419 (GLYFMGYLLFGLGTGFIGLFP). The Extracellular portion of the chain corresponds to 420-425 (NVYSTL). Residues 426-446 (VLCSMFGVMSSTLYTVPFNLI) traverse the membrane as a helical segment. The Cytoplasmic segment spans residues 447–477 (AEYHREEEKEKGQEAPGGPDNQGRGKGVDCA). Residues 478 to 498 (ALTCMVQLAQILVGGGLGFLV) form a helical membrane-spanning segment. Residues 499 to 504 (NMAGSV) are Extracellular-facing. A helical membrane pass occupies residues 505–525 (VVVVITASAVSLIGCCFVALF). Topologically, residues 526 to 530 (VRYVD) are cytoplasmic.

It belongs to the glycoside-pentoside-hexuronide (GPH) cation symporter transporter (TC 2.A.2) family. As to quaternary structure, interacts with TYRP1. In terms of tissue distribution, mainly expressed in eyeballs and skin melanocytes. Also detected in kidney, colon, gall bladder and pancreas.

Its subcellular location is the melanosome membrane. The enzyme catalyses sucrose(out) + H(+)(out) = sucrose(in) + H(+)(in). The catalysed reaction is D-glucose(out) + H(+)(out) = D-glucose(in) + H(+)(in). Proton-associated glucose and sucrose transporter. May be able to transport also fructose. Expressed at a late melanosome maturation stage where functions as a proton/glucose exporter which increase lumenal pH by decreasing glycolysis. Regulates melanogenesis by maintaining melanosome neutralization that is initially initiated by transient OCA2 and required for a proper function of the tyrosinase TYR. This is Membrane-associated transporter protein (Slc45a2) from Mus musculus (Mouse).